The chain runs to 239 residues: 4-hydroxy-tetrahydrodipicolinate reductase (239 aa).

Residues 9–14 (GINGKM), 78–80 (GTT), and 104–107 (APNF) each bind NAD(+). The Proton donor/acceptor role is filled by histidine 134. Histidine 135 contacts (S)-2,3,4,5-tetrahydrodipicolinate. Lysine 138 serves as the catalytic Proton donor. (S)-2,3,4,5-tetrahydrodipicolinate is bound at residue 144–145 (GT).

It belongs to the DapB family.

The protein localises to the cytoplasm. The enzyme catalyses (S)-2,3,4,5-tetrahydrodipicolinate + NAD(+) + H2O = (2S,4S)-4-hydroxy-2,3,4,5-tetrahydrodipicolinate + NADH + H(+). The catalysed reaction is (S)-2,3,4,5-tetrahydrodipicolinate + NADP(+) + H2O = (2S,4S)-4-hydroxy-2,3,4,5-tetrahydrodipicolinate + NADPH + H(+). The protein operates within amino-acid biosynthesis; L-lysine biosynthesis via DAP pathway; (S)-tetrahydrodipicolinate from L-aspartate: step 4/4. In terms of biological role, catalyzes the conversion of 4-hydroxy-tetrahydrodipicolinate (HTPA) to tetrahydrodipicolinate. The protein is 4-hydroxy-tetrahydrodipicolinate reductase of Coxiella burnetii (strain Dugway 5J108-111).